The chain runs to 262 residues: Putative hydro-lyase RHA1_ro03475 (262 aa).

Belongs to the D-glutamate cyclase family.

This chain is Putative hydro-lyase RHA1_ro03475, found in Rhodococcus jostii (strain RHA1).